Here is a 95-residue protein sequence, read N- to C-terminus: Aspartyl/glutamyl-tRNA(Asn/Gln) amidotransferase subunit C (95 aa).

It belongs to the GatC family. Heterotrimer of A, B and C subunits.

It catalyses the reaction L-glutamyl-tRNA(Gln) + L-glutamine + ATP + H2O = L-glutaminyl-tRNA(Gln) + L-glutamate + ADP + phosphate + H(+). It carries out the reaction L-aspartyl-tRNA(Asn) + L-glutamine + ATP + H2O = L-asparaginyl-tRNA(Asn) + L-glutamate + ADP + phosphate + 2 H(+). In terms of biological role, allows the formation of correctly charged Asn-tRNA(Asn) or Gln-tRNA(Gln) through the transamidation of misacylated Asp-tRNA(Asn) or Glu-tRNA(Gln) in organisms which lack either or both of asparaginyl-tRNA or glutaminyl-tRNA synthetases. The reaction takes place in the presence of glutamine and ATP through an activated phospho-Asp-tRNA(Asn) or phospho-Glu-tRNA(Gln). This Dehalococcoides mccartyi (strain CBDB1) protein is Aspartyl/glutamyl-tRNA(Asn/Gln) amidotransferase subunit C.